A 1441-amino-acid polypeptide reads, in one-letter code: Gag-Pol polyprotein (1441 aa).

G2 carries the N-myristoyl glycine; by host lipid modification. Positions 16–22 (FEKIRLK) match the Nuclear export signal motif. The short motif at 26–32 (KKCYRLK) is the Nuclear localization signal element. Residues 204-226 (THPQQQPAQPGGGLRTPSGSDIA) form a disordered region. 2 CCHC-type zinc fingers span residues 386 to 403 (PICFNCNKEGHVARFFKA) and 407 to 424 (KGCWNCGAMDHQKAQCPK). A compositionally biased stretch (polar residues) spans 444–466 (TGELSGTRGDSNSSTIRGETSAE). A disordered region spans residues 444–494 (TGELSGTRGDSNSSTIRGETSAENSEHLSEIRERAQAEDEGGEERGGFSFP). Positions 467–480 (NSEHLSEIRERAQA) are enriched in basic and acidic residues. A Peptidase A2 domain is found at 513–584 (IRALLDTGAD…TPIDIIGRNI (72 aa)). The active-site For protease activity; shared with dimeric partner is the D518. Residues 640 to 830 (EGKISRVDPG…PPFHWMGYEL (191 aa)) enclose the Reverse transcriptase domain. The Mg(2+) site is built by D706, D781, and D782. The tract at residues 823–831 (FHWMGYELH) is RT 'primer grip'. The Tryptophan repeat motif motif lies at 994 to 1010 (WEDWWHEYWQCTWIPEV). In terms of domain architecture, RNase H type-1 spans 1030 to 1153 (LEGVETYYVD…IDKLVSSGIR (124 aa)). Residues D1039, E1074, D1094, and D1145 each coordinate Mg(2+). The Integrase-type zinc finger occupies 1159-1200 (QNIEPAQEEHEKYHSNEAQLREKFHLPALVAKQIVQSCSKCC). Positions 1168, 1172, 1196, and 1199 each coordinate Zn(2+). Positions 1210–1360 (TDASLGVWQI…TAGERIVNMI (151 aa)) constitute an Integrase catalytic domain. Residues D1220 and D1272 each coordinate Mg(2+). A DNA-binding region (integrase-type) is located at residues 1379–1426 (FKVYFREGRDQLWKGPGILLWKGEGAVVLKYQEEIKIVPRRKCKIIKD).

Homotrimer. Interacts with gp41 (via C-terminus). As to quaternary structure, homodimer. The active site consists of two apposed aspartic acid residues. In terms of assembly, heterodimer of p66 RT and p51 RT (RT p66/p51). Heterodimerization of RT is essential for DNA polymerase activity. Despite the sequence identities, p66 RT and p51 RT have distinct folding. Homotetramer; may further associate as a homohexadecamer. Requires Mg(2+) as cofactor. In terms of processing, specific enzymatic cleavages by the viral protease yield mature proteins. The protease is released by autocatalytic cleavage. The polyprotein is cleaved during and after budding, this process is termed maturation. Proteolytic cleavage of p66 RT removes the RNase H domain to yield the p51 RT subunit. Capsid protein p24 is phosphorylated.

Its subcellular location is the virion. It localises to the host nucleus. The protein resides in the host cytoplasm. The protein localises to the host cell membrane. It carries out the reaction Specific for a P1 residue that is hydrophobic, and P1' variable, but often Pro.. The catalysed reaction is Endohydrolysis of RNA in RNA/DNA hybrids. Three different cleavage modes: 1. sequence-specific internal cleavage of RNA. Human immunodeficiency virus type 1 and Moloney murine leukemia virus enzymes prefer to cleave the RNA strand one nucleotide away from the RNA-DNA junction. 2. RNA 5'-end directed cleavage 13-19 nucleotides from the RNA end. 3. DNA 3'-end directed cleavage 15-20 nucleotides away from the primer terminus.. The enzyme catalyses 3'-end directed exonucleolytic cleavage of viral RNA-DNA hybrid.. It catalyses the reaction DNA(n) + a 2'-deoxyribonucleoside 5'-triphosphate = DNA(n+1) + diphosphate. Its activity is regulated as follows. The viral protease is inhibited by many synthetic protease inhibitors (PIs), such as amprenavir, atazanavir, indinavir, loprinavir, nelfinavir, ritonavir and saquinavir. RT can be inhibited either by nucleoside RT inhibitors (NRTIs) or by non nucleoside RT inhibitors (NNRTIs). NRTIs act as chain terminators, whereas NNRTIs inhibit DNA polymerization by binding a small hydrophobic pocket near the RT active site and inducing an allosteric change in this region. Classical NRTIs are abacavir, adefovir (PMEA), didanosine (ddI), lamivudine (3TC), stavudine (d4T), tenofovir (PMPA), zalcitabine (ddC), and zidovudine (AZT). Classical NNRTIs are atevirdine (BHAP U-87201E), delavirdine, efavirenz (DMP-266), emivirine (I-EBU), and nevirapine (BI-RG-587). The tritherapies used as a basic effective treatment of AIDS associate two NRTIs and one NNRTI. Use of protease inhibitors in tritherapy regimens permit more ambitious therapeutic strategies. Functionally, gag-Pol polyprotein and Gag polyprotein may regulate their own translation, by the binding genomic RNA in the 5'-UTR. At low concentration, Gag-Pol and Gag would promote translation, whereas at high concentration, the polyproteins encapsidate genomic RNA and then shut off translation. Its function is as follows. Matrix protein p17 has two main functions: in infected cell, it targets Gag and Gag-pol polyproteins to the plasma membrane via a multipartite membrane-binding signal, that includes its myristointegration complex. The myristoylation signal and the NLS exert conflicting influences its subcellular localization. The key regulation of these motifs might be phosphorylation of a portion of MA molecules on the C-terminal tyrosine at the time of virus maturation, by virion-associated cellular tyrosine kinase. Implicated in the release from host cell mediated by Vpu. In terms of biological role, capsid protein p24 forms the conical core that encapsulates the genomic RNA-nucleocapsid complex in the virion. The core is constituted by capsid protein hexamer subunits. The core is disassembled soon after virion entry. Interaction with host PPIA/CYPA protects the virus from restriction by host TRIM5-alpha and from an unknown antiviral activity in host cells. This capsid restriction by TRIM5 is one of the factors which restricts SIV to the simian species. Nucleocapsid protein p7 encapsulates and protects viral dimeric unspliced (genomic) RNA. Binds these RNAs through its zinc fingers. Facilitates rearangement of nucleic acid secondary structure during retrotranscription of genomic RNA. This capability is referred to as nucleic acid chaperone activity. Functionally, the aspartyl protease mediates proteolytic cleavages of Gag and Gag-Pol polyproteins during or shortly after the release of the virion from the plasma membrane. Cleavages take place as an ordered, step-wise cascade to yield mature proteins. This process is called maturation. Displays maximal activity during the budding process just prior to particle release from the cell. Also cleaves Nef and Vif, probably concomitantly with viral structural proteins on maturation of virus particles. Hydrolyzes host EIF4GI and PABP1 in order to shut off the capped cellular mRNA translation. The resulting inhibition of cellular protein synthesis serves to ensure maximal viral gene expression and to evade host immune response. Its function is as follows. Reverse transcriptase/ribonuclease H (RT) is a multifunctional enzyme that converts the viral dimeric RNA genome into dsDNA in the cytoplasm, shortly after virus entry into the cell. This enzyme displays a DNA polymerase activity that can copy either DNA or RNA templates, and a ribonuclease H (RNase H) activity that cleaves the RNA strand of RNA-DNA heteroduplexes in a partially processive 3' to 5' endonucleasic mode. Conversion of viral genomic RNA into dsDNA requires many steps. A tRNA binds to the primer-binding site (PBS) situated at the 5'-end of the viral RNA. RT uses the 3' end of the tRNA primer to perform a short round of RNA-dependent minus-strand DNA synthesis. The reading proceeds through the U5 region and ends after the repeated (R) region which is present at both ends of viral RNA. The portion of the RNA-DNA heteroduplex is digested by the RNase H, resulting in a ssDNA product attached to the tRNA primer. This ssDNA/tRNA hybridizes with the identical R region situated at the 3' end of viral RNA. This template exchange, known as minus-strand DNA strong stop transfer, can be either intra- or intermolecular. RT uses the 3' end of this newly synthesized short ssDNA to perform the RNA-dependent minus-strand DNA synthesis of the whole template. RNase H digests the RNA template except for two polypurine tracts (PPTs) situated at the 5'-end and near the center of the genome. It is not clear if both polymerase and RNase H activities are simultaneous. RNase H can probably proceed both in a polymerase-dependent (RNA cut into small fragments by the same RT performing DNA synthesis) and a polymerase-independent mode (cleavage of remaining RNA fragments by free RTs). Secondly, RT performs DNA-directed plus-strand DNA synthesis using the PPTs that have not been removed by RNase H as primers. PPTs and tRNA primers are then removed by RNase H. The 3' and 5' ssDNA PBS regions hybridize to form a circular dsDNA intermediate. Strand displacement synthesis by RT to the PBS and PPT ends produces a blunt ended, linear dsDNA copy of the viral genome that includes long terminal repeats (LTRs) at both ends. In terms of biological role, integrase catalyzes viral DNA integration into the host chromosome, by performing a series of DNA cutting and joining reactions. This enzyme activity takes place after virion entry into a cell and reverse transcription of the RNA genome in dsDNA. The first step in the integration process is 3' processing. This step requires a complex comprising the viral genome, matrix protein, Vpr and integrase. This complex is called the pre-integration complex (PIC). The integrase protein removes 2 nucleotides from each 3' end of the viral DNA, leaving recessed CA OH's at the 3' ends. In the second step, the PIC enters cell nucleus. This process is mediated through integrase and Vpr proteins, and allows the virus to infect a non dividing cell. This ability to enter the nucleus is specific of lentiviruses, other retroviruses cannot and rely on cell division to access cell chromosomes. In the third step, termed strand transfer, the integrase protein joins the previously processed 3' ends to the 5' ends of strands of target cellular DNA at the site of integration. The 5'-ends are produced by integrase-catalyzed staggered cuts, 5 bp apart. A Y-shaped, gapped, recombination intermediate results, with the 5'-ends of the viral DNA strands and the 3' ends of target DNA strands remaining unjoined, flanking a gap of 5 bp. The last step is viral DNA integration into host chromosome. This involves host DNA repair synthesis in which the 5 bp gaps between the unjoined strands are filled in and then ligated. Since this process occurs at both cuts flanking the SIV genome, a 5 bp duplication of host DNA is produced at the ends of SIV integration. Alternatively, Integrase may catalyze the excision of viral DNA just after strand transfer, this is termed disintegration. The chain is Gag-Pol polyprotein (gag-pol) from Cercopithecidae (Old World monkeys).